A 263-amino-acid polypeptide reads, in one-letter code: Aquaporin Lacbi1:233199 (263 aa).

The Cytoplasmic segment spans residues 1–17 (MFTLAHHRHAIRKPMAE). A helical transmembrane segment spans residues 18-38 (FFGVALLVIFGAGAACQVVLS). Topologically, residues 39–44 (TNPNSF) are extracellular. A helical membrane pass occupies residues 45–65 (LSINFGWAIGIAMGAWISGSI). The Cytoplasmic segment spans residues 66–88 (SGGHINPAITIAMATYRGFPWRE). The short motif at 71-73 (NPA) is the NPA 1 element. Residues 89–109 (VPSYILAQVLGGVVGAALVYA) traverse the membrane as a helical segment. At 110 to 143 (NYIHAIDVFEGGRHIRTQATASLFATYALPYMTQ) the chain is on the extracellular side. A helical membrane pass occupies residues 144 to 164 (VSCFFSEFLATAVLAMMVLAL). Topologically, residues 165–174 (TDNRNGAPTN) are cytoplasmic. Residues 175-195 (GLSPFALFVLFIGLGASLGME) form a helical membrane-spanning segment. Residues 196–227 (TAYALNPARDFGPRLFLAMAGYGKALFNYRSQ) lie on the Extracellular side of the membrane. The NPA 2 motif lies at 201 to 203 (NPA). Residues 228 to 248 (YWLWAPIIAPVLGAQAGGLLY) form a helical membrane-spanning segment. The Cytoplasmic portion of the chain corresponds to 249-263 (DTFLYDGDDSPIKWR).

The protein belongs to the MIP/aquaporin (TC 1.A.8) family.

It is found in the membrane. The enzyme catalyses H2O(in) = H2O(out). In terms of biological role, probable water channel required to facilitate the transport of water across membranes. This is Aquaporin Lacbi1:233199 from Laccaria bicolor (strain S238N-H82 / ATCC MYA-4686) (Bicoloured deceiver).